The chain runs to 271 residues: Monalysin (271 aa).

A propeptide spanning residues 1–33 (MTIKEELGQPQSHSIELDEVSKEAASTRAALTS) is cleaved from the precursor. The tract at residues 102-170 (IPQNVTTTLS…FTDTTEMKGP (69 aa)) is pore-forming domain.

In terms of assembly, pro-Monalysin forms a stable donut-like 18-mer complex composed of two disk-shaped nonamers held together by N-terminal swapping of the pro-peptides. After proteolytic cleavage, the inactive 18-mer complex probably dissociates into two disk-shaped active nonamers in which the transmembrane segments are unmasked and ready to engage the conformational change leading to the pore formation into the target membrane. Multimerizes into circular-like structures and barrel-like aggregates. Post-translationally, requires N-terminal cleavage to become fully active. The metalloprotease AprA can induce the rapid cleavage of pro-Monalysin into its active form. Can also be processed by trypsin.

It is found in the secreted. The protein resides in the host cell membrane. Its function is as follows. Pore-forming toxin that contributes to the virulence of P.entomophila against Drosophila, playing an important role in host intestinal damage and lethality. Displays cytolytic and hemolytic activity. This is Monalysin from Pseudomonas entomophila (strain L48).